A 434-amino-acid chain; its full sequence is Beta-glucuronosyltransferase GlcAT14B (434 aa).

The Cytoplasmic segment spans residues 1 to 21; that stretch reads MKKLKSYYMQVRNQQQSLDRK. A signal-anchor for type II membrane protein transmembrane segment spans residues 22–42; the sequence is WILPLAIGSICSLFLLLLTNL. Topologically, residues 43–434 are lumenal; the sequence is ASSSGQTRLI…TENFRPRQCR (392 aa). Residues N138, N187, N316, and N392 are each glycosylated (N-linked (GlcNAc...) asparagine).

Belongs to the glycosyltransferase 14 family.

Its subcellular location is the golgi apparatus membrane. Its function is as follows. Beta-glucuronosyltransferase involved in the biosynthesis of type II arabinogalactan (AG). Modifies both the beta-1,6-linked galactan and beta-1,3-linked galactan present in type II AG. The protein is Beta-glucuronosyltransferase GlcAT14B of Arabidopsis thaliana (Mouse-ear cress).